The primary structure comprises 268 residues: Undecaprenyl-diphosphatase (268 aa).

Helical transmembrane passes span 3 to 23, 46 to 66, 84 to 104, 107 to 127, 144 to 164, 185 to 205, 213 to 233, and 246 to 266; these read FFNL…EFIP, FEVL…SAKL, LGVL…HGFI, VLFE…FILL, YPLP…IPGV, AEFS…YDLF, FNDG…GVFV, and FALF…ALII.

The protein belongs to the UppP family.

It localises to the cell inner membrane. The enzyme catalyses di-trans,octa-cis-undecaprenyl diphosphate + H2O = di-trans,octa-cis-undecaprenyl phosphate + phosphate + H(+). Its function is as follows. Catalyzes the dephosphorylation of undecaprenyl diphosphate (UPP). Confers resistance to bacitracin. This Brucella abortus (strain S19) protein is Undecaprenyl-diphosphatase.